A 204-amino-acid chain; its full sequence is Protein Nef (204 aa).

Residues 1-27 (MGNKWSKSWPQVRDRMRRAAPAPAADG) are disordered. A lipid anchor (N-myristoyl glycine; by host) is attached at glycine 2. At serine 6 the chain carries Phosphoserine; by host. An acidic; interacts with host PACS1 and PACS2; stabilizes the interaction of NEF/MHC-I with host AP1M1; necessary for MHC-I internalization region spans residues 60–63 (TEEE). The interval 67 to 76 (PVRPQVPLRP) is SH3-binding; interaction with Src family tyrosine kinases. The PxxP; stabilizes the interaction of NEF/MHC-I with host AP1M1; necessary for MHC-I internalization motif lies at 70 to 73 (PQVP). A mediates dimerization, Nef-PTE1 interaction region spans residues 106–122 (EILDLWVHNTQGYFPDW). The tract at residues 146-178 (VDPSEVEEANEGENNCLLHPACQHGIEDEEREV) is binding to ATP6V1H. Residues 162 to 163 (LL) carry the Dileucine internalization motif; necessary for CD4 internalization motif. Positions 172–173 (ED) match the Diacidic; necessary for CD4 internalization motif.

It belongs to the lentivirus primate group Nef protein family. Monomer; cytosolic form. Homodimer; membrane bound form. Interacts with Nef associated p21-activated kinase (PAK2); this interaction activates PAK2. Associates with the Nef-MHC-I-AP1 complex; this complex is required for MHC-I internalization. Interacts (via C-terminus) with host PI3-kinase. Interacts with host PACS1; this interaction seems to be weak. Interacts with host PACS2. Interacts with host LCK and MAPK3; these interactions inhibit the kinase activity of the latter. Interacts with host ATP6V1H; this interaction may play a role in CD4 endocytosis. Associates with the CD4-Nef-AP2 complex; this complex is required for CD4 internalization. Interacts with host AP2 subunit alpha and AP2 subunit sigma2. Interacts with TCR-zeta chain; this interaction up-regulates the Fas ligand (FasL) surface expression. Interacts with host HCK, LYN, and SRC; these interactions activate the Src family kinases. Interacts with MAP3K5; this interaction inhibits the Fas and TNFR-mediated death signals. Interacts with beta-COP and PTE1. Interacts with human RACK1; this increases Nef phosphorylation by PKC. Interacts with TP53; this interaction decreases the half-life of TP53, protecting the infected cell against p53-mediated apoptosis. Post-translationally, the virion-associated Nef proteins are cleaved by the viral protease to release the soluble C-terminal core protein. Nef is probably cleaved concomitantly with viral structural proteins on maturation of virus particles. Myristoylated. In terms of processing, phosphorylated on serine residues, probably by host PKCdelta and theta.

Its subcellular location is the host cell membrane. The protein localises to the virion. The protein resides in the secreted. It localises to the host Golgi apparatus membrane. In terms of biological role, factor of infectivity and pathogenicity, required for optimal virus replication. Alters numerous pathways of T-lymphocyte function and down-regulates immunity surface molecules in order to evade host defense and increase viral infectivity. Alters the functionality of other immunity cells, like dendritic cells, monocytes/macrophages and NK cells. Its function is as follows. In infected CD4(+) T-lymphocytes, down-regulates the surface MHC-I, mature MHC-II, CD4, CD28, CCR5 and CXCR4 molecules. Mediates internalization and degradation of host CD4 through the interaction of with the cytoplasmic tail of CD4, the recruitment of AP-2 (clathrin adapter protein complex 2), internalization through clathrin coated pits, and subsequent transport to endosomes and lysosomes for degradation. Diverts host MHC-I molecules to the trans-Golgi network-associated endosomal compartments by an endocytic pathway to finally target them for degradation. MHC-I down-regulation may involve AP-1 (clathrin adapter protein complex 1) or possibly Src family kinase-ZAP70/Syk-PI3K cascade recruited by PACS2. In consequence infected cells are masked for immune recognition by cytotoxic T-lymphocytes. Decreasing the number of immune receptors also prevents reinfection by more HIV particles (superinfection). Down-regulates host SERINC3 and SERINC5 thereby excluding these proteins from the viral particles. Virion infectivity is drastically higher when SERINC3 or SERINC5 are excluded from the viral envelope, because these host antiviral proteins impair the membrane fusion event necessary for subsequent virion penetration. Functionally, bypasses host T-cell signaling by inducing a transcriptional program nearly identical to that of anti-CD3 cell activation. Interaction with TCR-zeta chain up-regulates the Fas ligand (FasL). Increasing surface FasL molecules and decreasing surface MHC-I molecules on infected CD4(+) cells send attacking cytotoxic CD8+ T-lymphocytes into apoptosis. Plays a role in optimizing the host cell environment for viral replication without causing cell death by apoptosis. Protects the infected cells from apoptosis in order to keep them alive until the next virus generation is ready to strike. Inhibits the Fas and TNFR-mediated death signals by blocking MAP3K5/ASK1. Decreases the half-life of TP53, protecting the infected cell against p53-mediated apoptosis. Inhibits the apoptotic signals regulated by the Bcl-2 family proteins through the formation of a Nef/PI3-kinase/PAK2 complex that leads to activation of PAK2 and induces phosphorylation of host BAD. In terms of biological role, extracellular Nef protein targets CD4(+) T-lymphocytes for apoptosis by interacting with CXCR4 surface receptors. The polypeptide is Protein Nef (Homo sapiens (Human)).